Consider the following 515-residue polypeptide: Maturase K (515 aa).

Belongs to the intron maturase 2 family. MatK subfamily.

Its subcellular location is the plastid. The protein localises to the chloroplast. Functionally, usually encoded in the trnK tRNA gene intron. Probably assists in splicing its own and other chloroplast group II introns. The sequence is that of Maturase K from Picea sitchensis (Sitka spruce).